A 155-amino-acid polypeptide reads, in one-letter code: uncharacterized protein (155 aa).

Disordered regions lie at residues 24-63 (RVGYREGPTVETKKIQPQLPDEDGNESDKEDEQPQVVVLK) and 80-155 (KAAK…DENE). Over residues 43–56 (PDEDGNESDKEDEQ) the composition is skewed to acidic residues. At S50 the chain carries Phosphoserine. The residue at position 108 (K108) is an N6-acetyllysine. Over residues 128 to 147 (KQSPVRKNSQKQIKNSSLLS) the composition is skewed to polar residues. Phosphoserine is present on residues S130, S147, and S150.

This is an uncharacterized protein from Rattus norvegicus (Rat).